Reading from the N-terminus, the 920-residue chain is MGEVAGGAAPGPPRSGLVSIIIGAEDEDFENELEANSEDQNSQFQSLEQVKRRPAHLMALLQHVALQFEPGPLLCCLHADMLSSLGPKEAKKAFLDFYHSFLEKTAVLRVPVPPSVAFELDRTRPDLISEDVQRRFIQEVVQSQQAAVSRQLEDFRSKRLMGMTPWEQELSLLEPWIGKDRGNYEARERHVAERLLSHLEETQHTISTDEEKSAAVVTAISLYMRHLGVRTKSGDKKSGRNFFRKKVMGNRRSDEPPKTKKGLSSILDPARWNRGEPSAPDCRHLKVEADAEKPGPADRKGGLGMSSRDRTVGTPGQDNPGVSLHPLSTDSVDSREPGVDTPQEPGDTPPQGPTSLEPLAPPESTEDNGETESPEPGDDGEPGRSGLELEPEEPPGWRELVPPDTLLSLPKSQVKRQEVISELLVTEAAHVRMLRVLHDLFYQPMADGGFFPLDELQNIFPSLDELIEVHSLFLDRLMKRRQESGYLIEEIGDVLLARFDGAEGSWFQKISSRFCSRQSFALEQLKAKQRKEPRFCAFVQEAESRPRCRRLQLKDMIPTEMQRLTKYPLLLQSIGQNTEESTERGKVELAAECCREILHHVNQAVRDMEDLLRLKDYQRRLDLTHLRQSSDPMLSEFKNLDITKKKLVHEGPLTWRVTKDKAIEVHVLLLDDLLLLLQRQDERLLLKSHSRTLTPTPDGKTMLRPVLRLTSAMTREVATDHKAFYVIFTWDQEAQIYELVAQTSSERKNWCNLITETAGSLKVPAPASRLKPRPSPSSIREPLLSSSENGTGGAEMAPADARTERLLNDLLPFCRPGPEGQLAATALQKVLSLKQILLSTEEDSGAGPPRDGDGVPGGRAPGPVHTQEIEENLLSLEVAIRQLEELEEEFCRLRPLLSQLGGTLSPNLAAPERSAQTGLS.

One can recognise an RGSL domain in the interval 39–230; that stretch reads DQNSQFQSLE…SLYMRHLGVR (192 aa). The tract at residues 231–404 is disordered; that stretch reads TKSGDKKSGR…PGWRELVPPD (174 aa). The span at 281–311 shows a compositional bias: basic and acidic residues; the sequence is DCRHLKVEADAEKPGPADRKGGLGMSSRDRT. Residues 364–380 show a composition bias toward acidic residues; sequence STEDNGETESPEPGDDG. 5 positions are modified to phosphoserine: serine 373, glycine 386, glutamate 390, serine 408, and serine 412. A DH domain is found at 415 to 604; sequence KRQEVISELL…REILHHVNQA (190 aa). 2 positions are modified to phosphothreonine: arginine 432 and threonine 694. One can recognise a PH domain in the interval 646–759; that stretch reads KLVHEGPLTW…WCNLITETAG (114 aa). A Phosphotyrosine; by JAK2 modification is found at tyrosine 737. Disordered stretches follow at residues 764-797 and 840-864; these read PAPA…AEMA and TEED…PGPV. The stretch at 865–894 forms a coiled coil; that stretch reads HTQEIEENLLSLEVAIRQLEELEEEFCRLR. Serine 905 carries the post-translational modification Phosphoserine.

As to quaternary structure, interacts with RHOA, GNA12 and GNA13. Homooligomerizes through the coiled coil region. Interacts with CTNNAL1. May interact with CCPG1. Phosphorylated by PKCA. Angiotensin-2 induced Tyr-737 phosphorylation is mediated by JAK2. Isoform 5 is phosphorylated at 'Ser-390'. As to expression, ubiquitously expressed.

The protein resides in the cytoplasm. It localises to the membrane. Seems to play a role in the regulation of RhoA GTPase by guanine nucleotide-binding alpha-12 (GNA12) and alpha-13 (GNA13) subunits. Acts as a GTPase-activating protein (GAP) for GNA12 and GNA13, and as guanine nucleotide exchange factor (GEF) for RhoA GTPase. Activated G alpha 13/GNA13 stimulates the RhoGEF activity through interaction with the RGS-like domain. This GEF activity is inhibited by binding to activated GNA12. Mediates angiotensin-2-induced RhoA activation. Isoform 3 and isoform 4 do not homooligomerize and show an enhanced RhoGEF activity. In lymphoid follicles, may trigger activation of GNA13 as part of S1PR2-dependent signaling pathway that leads to inhibition of germinal center (GC) B cell growth and migration outside the GC niche. In Mus musculus (Mouse), this protein is Rho guanine nucleotide exchange factor 1 (Arhgef1).